A 421-amino-acid polypeptide reads, in one-letter code: Histidine--tRNA ligase (421 aa).

It belongs to the class-II aminoacyl-tRNA synthetase family. Homodimer.

The protein resides in the cytoplasm. It carries out the reaction tRNA(His) + L-histidine + ATP = L-histidyl-tRNA(His) + AMP + diphosphate + H(+). The sequence is that of Histidine--tRNA ligase from Thermus thermophilus (strain ATCC BAA-163 / DSM 7039 / HB27).